The following is a 153-amino-acid chain: 6,7-dimethyl-8-ribityllumazine synthase (153 aa).

5-amino-6-(D-ribitylamino)uracil is bound by residues F22, 56–58, and 80–82; these read AFE and AVI. 85–86 contributes to the (2S)-2-hydroxy-3-oxobutyl phosphate binding site; sequence ST. H88 acts as the Proton donor in catalysis. F113 is a 5-amino-6-(D-ribitylamino)uracil binding site. (2S)-2-hydroxy-3-oxobutyl phosphate is bound at residue R127.

It belongs to the DMRL synthase family.

The enzyme catalyses (2S)-2-hydroxy-3-oxobutyl phosphate + 5-amino-6-(D-ribitylamino)uracil = 6,7-dimethyl-8-(1-D-ribityl)lumazine + phosphate + 2 H2O + H(+). It functions in the pathway cofactor biosynthesis; riboflavin biosynthesis; riboflavin from 2-hydroxy-3-oxobutyl phosphate and 5-amino-6-(D-ribitylamino)uracil: step 1/2. Its function is as follows. Catalyzes the formation of 6,7-dimethyl-8-ribityllumazine by condensation of 5-amino-6-(D-ribitylamino)uracil with 3,4-dihydroxy-2-butanone 4-phosphate. This is the penultimate step in the biosynthesis of riboflavin. The polypeptide is 6,7-dimethyl-8-ribityllumazine synthase (Clostridium botulinum (strain Alaska E43 / Type E3)).